The sequence spans 129 residues: NHP2-like protein 1 homolog (129 aa).

This sequence belongs to the eukaryotic ribosomal protein eL8 family.

It localises to the nucleus. Its subcellular location is the nucleolus. Functionally, binds to the 5'-stem-loop of U4 snRNA and may play a role in the late stage of spliceosome assembly. The protein undergoes a conformational change upon RNA-binding. In Dictyostelium discoideum (Social amoeba), this protein is NHP2-like protein 1 homolog.